We begin with the raw amino-acid sequence, 474 residues long: Trigger factor (474 aa).

One can recognise a PPIase FKBP-type domain in the interval 171-258 (GDVAVIDFQG…LKELKTRDLP (88 aa)). Residues 441–474 (TEVDAASATVETTATETAEEAPEAPKAKKGKKKA) form a disordered region. A compositionally biased stretch (low complexity) spans 444 to 456 (DAASATVETTATE).

Belongs to the FKBP-type PPIase family. Tig subfamily.

It localises to the cytoplasm. It catalyses the reaction [protein]-peptidylproline (omega=180) = [protein]-peptidylproline (omega=0). Its function is as follows. Involved in protein export. Acts as a chaperone by maintaining the newly synthesized protein in an open conformation. Functions as a peptidyl-prolyl cis-trans isomerase. The polypeptide is Trigger factor (Synechococcus elongatus (strain ATCC 33912 / PCC 7942 / FACHB-805) (Anacystis nidulans R2)).